A 481-amino-acid chain; its full sequence is Mediator of RNA polymerase II transcription subunit 3 (481 aa).

A coiled-coil region spans residues Q79 to Q107. Disordered regions lie at residues A140–P261 and N415–Y463. Over residues T148–A203 the composition is skewed to low complexity. Over residues K204–K213 the composition is skewed to basic residues. Low complexity predominate over residues K214–N248. Residues I249–G259 show a composition bias toward polar residues. Over residues M428–N458 the composition is skewed to low complexity.

This sequence belongs to the Mediator complex subunit 3 family. Component of the Mediator complex.

The protein localises to the nucleus. Functionally, component of the Mediator complex, a coactivator involved in regulated gene transcription of nearly all RNA polymerase II-dependent genes. Mediator functions as a bridge to convey information from gene-specific regulatory proteins to the basal RNA polymerase II transcription machinery. Mediator is recruited to promoters by direct interactions with regulatory proteins and serves as a scaffold for the assembly of a functional preinitiation complex with RNA polymerase II and the general transcription factors. The protein is Mediator of RNA polymerase II transcription subunit 3 (PGD1) of Candida glabrata (strain ATCC 2001 / BCRC 20586 / JCM 3761 / NBRC 0622 / NRRL Y-65 / CBS 138) (Yeast).